The following is a 102-amino-acid chain: Transcription factor UPBEAT1 (102 aa).

The bHLH domain maps to 32–82 (IRPRKSVEASRRPCRAIHRRVKTLKELVPNTKTSEGLDGLFRQTADYILAL).

Homodimer. Expressed in the root vascular tissue and in root hairs and lateral root caps. Detected at the protein level in all cell files in the elongation zone.

The protein resides in the nucleus. Functionally, transcription factor that modulates the balance between cellular proliferation and differentiation in root growth. Does not act through cytokinin and auxin signaling, but by repressing peroxidase expression in the elongation zone. The chain is Transcription factor UPBEAT1 (UPB1) from Arabidopsis thaliana (Mouse-ear cress).